The sequence spans 429 residues: Tryptophan synthase beta chain 2 (429 aa).

The segment at 18–40 (NINPDLPSPLPEPKNPEGGKNIE) is disordered. Position 110 is an N6-(pyridoxal phosphate)lysine (K110).

The protein belongs to the TrpB family. As to quaternary structure, tetramer of two alpha and two beta chains. Requires pyridoxal 5'-phosphate as cofactor.

The enzyme catalyses (1S,2R)-1-C-(indol-3-yl)glycerol 3-phosphate + L-serine = D-glyceraldehyde 3-phosphate + L-tryptophan + H2O. It participates in amino-acid biosynthesis; L-tryptophan biosynthesis; L-tryptophan from chorismate: step 5/5. Functionally, the beta subunit is responsible for the synthesis of L-tryptophan from indole and L-serine. This is Tryptophan synthase beta chain 2 (trpB2) from Methanothermobacter thermautotrophicus (strain ATCC 29096 / DSM 1053 / JCM 10044 / NBRC 100330 / Delta H) (Methanobacterium thermoautotrophicum).